A 94-amino-acid chain; its full sequence is Putative pterin-4-alpha-carbinolamine dehydratase (94 aa).

The protein belongs to the pterin-4-alpha-carbinolamine dehydratase family.

It carries out the reaction (4aS,6R)-4a-hydroxy-L-erythro-5,6,7,8-tetrahydrobiopterin = (6R)-L-erythro-6,7-dihydrobiopterin + H2O. The protein is Putative pterin-4-alpha-carbinolamine dehydratase of Mycobacterium tuberculosis (strain ATCC 25177 / H37Ra).